The sequence spans 423 residues: Adenylosuccinate synthetase (423 aa).

Residues 12 to 18 (GDEGKGK) and 40 to 42 (GHT) each bind GTP. Asp-13 serves as the catalytic Proton acceptor. Residues Asp-13 and Gly-40 each contribute to the Mg(2+) site. IMP-binding positions include 13-16 (DEGK), 38-41 (NAGH), Thr-129, Arg-143, Gln-221, Thr-236, and Arg-300. The active-site Proton donor is His-41. Position 296–302 (296–302 (SVTGRKR)) interacts with substrate. GTP is bound by residues Arg-302 and 408-410 (SVG).

The protein belongs to the adenylosuccinate synthetase family. In terms of assembly, homodimer. Requires Mg(2+) as cofactor.

It is found in the cytoplasm. It carries out the reaction IMP + L-aspartate + GTP = N(6)-(1,2-dicarboxyethyl)-AMP + GDP + phosphate + 2 H(+). The protein operates within purine metabolism; AMP biosynthesis via de novo pathway; AMP from IMP: step 1/2. In terms of biological role, plays an important role in the de novo pathway of purine nucleotide biosynthesis. Catalyzes the first committed step in the biosynthesis of AMP from IMP. The protein is Adenylosuccinate synthetase of Bacteroides thetaiotaomicron (strain ATCC 29148 / DSM 2079 / JCM 5827 / CCUG 10774 / NCTC 10582 / VPI-5482 / E50).